The primary structure comprises 1172 residues: DNA-directed RNA polymerase subunit beta (1172 aa).

It belongs to the RNA polymerase beta chain family. In terms of assembly, the RNAP catalytic core consists of 2 alpha, 1 beta, 1 beta' and 1 omega subunit. When a sigma factor is associated with the core the holoenzyme is formed, which can initiate transcription.

The catalysed reaction is RNA(n) + a ribonucleoside 5'-triphosphate = RNA(n+1) + diphosphate. In terms of biological role, DNA-dependent RNA polymerase catalyzes the transcription of DNA into RNA using the four ribonucleoside triphosphates as substrates. The sequence is that of DNA-directed RNA polymerase subunit beta from Thermosipho melanesiensis (strain DSM 12029 / CIP 104789 / BI429).